Consider the following 325-residue polypeptide: Aldo-keto reductase family 1 member A1 (325 aa).

Ala-2 carries the post-translational modification N-acetylalanine. Ser-4 bears the Phosphoserine mark. Residues 11–20, Thr-21, Trp-22, and Asp-45 contribute to the NADP(+) site; that span reads GQKMPLIGLG. Residue Tyr-50 is the Proton donor of the active site. Lys-127 carries the N6-acetyllysine; alternate modification. Lys-127 is subject to N6-succinyllysine; alternate. Lys-145 bears the N6-succinyllysine mark. NADP(+)-binding residues include Ser-162, Asn-163, Ser-211, Leu-213, Ser-215, Ser-216, Lys-263, Ser-264, Val-265, Thr-266, Arg-269, Gln-272, and Asn-273. Ser-211 is modified (phosphoserine).

It belongs to the aldo/keto reductase family. As to quaternary structure, monomer.

It localises to the cytoplasm. It is found in the cytosol. The protein resides in the apical cell membrane. It carries out the reaction a primary alcohol + NADP(+) = an aldehyde + NADPH + H(+). It catalyses the reaction glycerol + NADP(+) = D-glyceraldehyde + NADPH + H(+). The enzyme catalyses glycerol + NADP(+) = L-glyceraldehyde + NADPH + H(+). The catalysed reaction is L-gulonate + NADP(+) = aldehydo-D-glucuronate + NADPH + H(+). It carries out the reaction L-gulono-1,4-lactone + NADP(+) = D-glucurono-3,6-lactone + NADPH + H(+). It catalyses the reaction allyl alcohol + NADP(+) = acrolein + NADPH + H(+). The enzyme catalyses hydroxyacetone + NADP(+) = methylglyoxal + NADPH + H(+). The catalysed reaction is 3-deoxyfructose + NADP(+) = 3-deoxyglucosone + NADPH + H(+). It carries out the reaction (R)-mevalonate + NADP(+) = (R)-mevaldate + NADPH + H(+). It catalyses the reaction pyridine 3-methanol + NADP(+) = pyridine-3-carbaldehyde + NADPH + H(+). The enzyme catalyses S-nitroso-CoA + NADPH + H(+) = sulfinamide-CoA + NADP(+). The catalysed reaction is S-nitrosoglutathione + NADPH + H(+) = S-(hydroxysulfenamide)glutathione + NADP(+). Catalyzes the NADPH-dependent reduction of a wide variety of carbonyl-containing compounds to their corresponding alcohols. Displays enzymatic activity towards endogenous metabolites such as aromatic and aliphatic aldehydes, ketones, monosaccharides and bile acids, with a preference for negatively charged substrates, such as glucuronate and succinic semialdehyde. Plays an important role in ascorbic acid biosynthesis by catalyzing the reduction of D-glucuronic acid and D-glucurono-gamma-lactone. Functions as a detoxifiying enzyme by reducing a range of toxic aldehydes. Reduces methylglyoxal and 3-deoxyglucosone, which are present at elevated levels under hyperglycemic conditions and are cytotoxic. Involved also in the detoxification of lipid-derived aldehydes like acrolein. Plays a role in the activation of procarcinogens, such as polycyclic aromatic hydrocarbon trans-dihydrodiols, and in the metabolism of various xenobiotics and drugs. Also acts as an inhibitor of protein S-nitrosylation by mediating degradation of S-nitroso-coenzyme A (S-nitroso-CoA), a cofactor required to S-nitrosylate proteins. S-nitroso-CoA reductase activity is involved in reprogramming intermediary metabolism in renal proximal tubules, notably by inhibiting protein S-nitrosylation of isoform 2 of PKM (PKM2). Also acts as a S-nitroso-glutathione reductase by catalyzing the NADPH-dependent reduction of S-nitrosoglutathione. Displays no reductase activity towards retinoids. In Sus scrofa (Pig), this protein is Aldo-keto reductase family 1 member A1 (AKR1A1).